Here is a 340-residue protein sequence, read N- to C-terminus: Peroxisomal coenzyme A diphosphatase 1, peroxisomal (340 aa).

Residues Met1 to Arg7 constitute a peroxisome transit peptide. Positions Lys37–Glu199 constitute a Nudix hydrolase domain. Residues Gly77 to Gly99 carry the Nudix box motif. The Mg(2+) site is built by Glu93 and Glu97.

Belongs to the Nudix hydrolase family. PCD1 subfamily. Mn(2+) serves as cofactor. Mg(2+) is required as a cofactor. In terms of processing, the size of the cleaved transit peptide can be of 7 or 8 residues.

The protein localises to the peroxisome. The enzyme catalyses CoA + H2O = (R)-4'-phosphopantetheine + adenosine 3',5'-bisphosphate + 2 H(+). It carries out the reaction CoA-disulfide + H2O = 4'-phosphopantetheinyl-CoA disulfide + adenosine 3',5'-bisphosphate + 2 H(+). The catalysed reaction is 8-oxo-dGTP + H2O = 8-oxo-dGMP + diphosphate + H(+). It catalyses the reaction 2-oxo-dATP + H2O = 2-oxo-dAMP + diphosphate + H(+). Diphosphatase (pyrophosphatase) with specificity for coenzyme A and CoA derivatives. Catalyzes the hydrolysis of the diphosphate linkage in CoA to give 3',5'-ADP and 4'-phosphopantetheine. Prefers oxidized CoA disulfide (CoASSCoA) over CoA as a substrate. May be required to remove potentially toxic oxidized CoA disulfide from peroxisomes to maintain the capacity for beta-oxidation of fatty acids. Can also hydrolyze 8-oxo-dGTP and 2-OH-dATP in vitro; therefore it may function as a sanitizing enzyme for oxidized nucleotides and may contribute to prevention of spontaneous mutagenesis due to the misincorporation of these oxidized nucleotides during DNA synthesis. Shows moderate activity in vitro with several short chain acyl-CoA esters and very low activity on 3'-dephospho-CoA while is not active with (deoxy)nucleoside 5'-triphosphates, nucleoside 5'-di- or monophosphates, diadenosine polyphosphates, nucleoside 5'-diphosphosugars, cytidine 5'-diphosphoalcohols, NAD(+), NADH, or FAD. The protein is Peroxisomal coenzyme A diphosphatase 1, peroxisomal (PCD1) of Saccharomyces cerevisiae (strain ATCC 204508 / S288c) (Baker's yeast).